The sequence spans 354 residues: Homeobox protein Nkx-2.4 (354 aa).

Residues 189–248 constitute a DNA-binding region (homeobox); sequence RRKRRVLFSQAQVYELERRFKQQKYLSAPEREHLASMIHLTPTQVKIWFQNHRYKMKRQA. A disordered region spans residues 246-329; the sequence is RQAKDKAAQQ…PALHGPGGGL (84 aa). Positions 263-272 are enriched in pro residues; it reads GPPPPPPPSP.

Belongs to the NK-2 homeobox family.

The protein resides in the nucleus. Its function is as follows. Probable transcription factor. In Homo sapiens (Human), this protein is Homeobox protein Nkx-2.4 (NKX2-4).